The chain runs to 32 residues: Peptide tarsal-less AA (32 aa).

The disordered stretch occupies residues 1–32 (MLDPTGTYRRPRDTQDSRQKRRQDCLDPTGQY). Repeat 1 spans residues 2–8 (LDPTGTY). Residues 2 to 32 (LDPTGTYRRPRDTQDSRQKRRQDCLDPTGQY) are 2 X 7 AA repeats of L-D-P-T-G-[TQ]-Y. Residues 10–25 (RPRDTQDSRQKRRQDC) are compositionally biased toward basic and acidic residues. Repeat 2 spans residues 26 to 32 (LDPTGQY).

It is found in the cytoplasm. The protein resides in the nucleus. Functionally, one of four peptides (tal-1A, tal-2A, tal-3A and tal-AA) produced from a polycistronic gene that function redundantly in several developmental processes. Required in early stages of leg development for the intercalation of the tarsal segments during the mid-third instar stage and later for tarsal joint formation. Promotes the post-translational modification of ovo isoform B (svb) into its active form which in turn initiates trichome development and promotes tarsal joint development. This is likely due to recruitment of the E3 ubiquitin-protein ligase Ubr3 to svb for ubiquitination of its N-terminus, converting svb into a transcriptional activator. Also enhances interaction of Ubr3 with Diap1. Required for correct wing and leg formation through its regulation of several genes including those in the Notch signaling pathway. Essential for denticle formation and may have a role in the developmental timing of trichome differentiation. Essential for the development of taenidial folds in the trachea. In Drosophila melanogaster (Fruit fly), this protein is Peptide tarsal-less AA.